Reading from the N-terminus, the 301-residue chain is Sulfate adenylyltransferase subunit 2 (301 aa).

Belongs to the PAPS reductase family. CysD subfamily. As to quaternary structure, heterodimer composed of CysD, the smaller subunit, and CysN.

The enzyme catalyses sulfate + ATP + H(+) = adenosine 5'-phosphosulfate + diphosphate. It participates in sulfur metabolism; hydrogen sulfide biosynthesis; sulfite from sulfate: step 1/3. In terms of biological role, with CysN forms the ATP sulfurylase (ATPS) that catalyzes the adenylation of sulfate producing adenosine 5'-phosphosulfate (APS) and diphosphate, the first enzymatic step in sulfur assimilation pathway. APS synthesis involves the formation of a high-energy phosphoric-sulfuric acid anhydride bond driven by GTP hydrolysis by CysN coupled to ATP hydrolysis by CysD. The protein is Sulfate adenylyltransferase subunit 2 of Shewanella woodyi (strain ATCC 51908 / MS32).